We begin with the raw amino-acid sequence, 332 residues long: L-lactate dehydrogenase A chain (332 aa).

Residues 29 to 57 and Arg99 each bind NAD(+); that span reads GMVGMASAISILLKDLCDELAMVDVMEDK. Residues Arg106, Asn138, and Arg169 each contribute to the substrate site. Asn138 contributes to the NAD(+) binding site. His193 acts as the Proton acceptor in catalysis. Thr248 is a binding site for substrate.

This sequence belongs to the LDH/MDH superfamily. LDH family. As to quaternary structure, homotetramer.

The protein resides in the cytoplasm. It catalyses the reaction (S)-lactate + NAD(+) = pyruvate + NADH + H(+). It functions in the pathway fermentation; pyruvate fermentation to lactate; (S)-lactate from pyruvate: step 1/1. Its function is as follows. Interconverts simultaneously and stereospecifically pyruvate and lactate with concomitant interconversion of NADH and NAD(+). The protein is L-lactate dehydrogenase A chain (ldha) of Eleginops maclovinus (Patagonian blennie).